A 496-amino-acid chain; its full sequence is Transmembrane protein 104 (496 aa).

Over 1–10 (MAGEITETGE) the chain is Cytoplasmic. A helical membrane pass occupies residues 11 to 31 (LYSPYVGLVYMFNLIVGTGAL). The Extracellular portion of the chain corresponds to 32 to 36 (TMPKA). The chain crosses the membrane as a helical span at residues 37 to 57 (FATAGWLVSLVLLVFVGFMSF). Topologically, residues 58–146 (VTTTFAMEAM…SMFFNKVGVN (89 aa)) are cytoplasmic. Residues 81 to 100 (THKEEDDEDSSTASDSDLLS) form a disordered region. The segment covering 91–100 (STASDSDLLS) has biased composition (low complexity). Residues 147–167 (LFYFCIITYLYGDLAIYAAAV) form a helical membrane-spanning segment. Topologically, residues 168–204 (PVSLMQVTCSVSGNDSCGVDTDARYNDTDLCWGPLRR) are extracellular. N-linked (GlcNAc...) asparagine glycosylation occurs at asparagine 193. Residues 205–225 (VDVYRIYLAIFTVLLGPFTFF) traverse the membrane as a helical segment. Residues 226–233 (DVQKTKYL) lie on the Cytoplasmic side of the membrane. Residues 234–254 (QILTSMMRWIAFAIMIVLALV) form a helical membrane-spanning segment. Topologically, residues 255-265 (RIGKGQGEGHP) are extracellular. The chain crosses the membrane as a helical span at residues 266–286 (PLANFLGVQNLFGVCVYSFMC). The Cytoplasmic portion of the chain corresponds to 287–306 (QHSLPSLITPISSKRHITRL). The helical transmembrane segment at 307–327 (LFLDYALILAFYGLLSFTAIF) threads the bilayer. Over 328 to 354 (CFRGDSLMDMYTLNFARCDVVGLAAVR) the chain is Extracellular. The chain crosses the membrane as a helical span at residues 355–375 (FFLGLFPVFTISTNFPIIAVT). Residues 376–397 (LRNNWKTLFHREGGTYPWVVDR) lie on the Cytoplasmic side of the membrane. Residues 398–418 (VVFPTITLVPPILVAFCTHDL) form a helical membrane-spanning segment. The Extracellular portion of the chain corresponds to 419–421 (ESL). A helical membrane pass occupies residues 422-442 (VAITGAYAGTGIQYVIPAFLV). At 443–470 (YLCRKDTQLTFGYGTVNKHRSPFRHTFW) the chain is on the cytoplasmic side. The helical transmembrane segment at 471–491 (VAFVLLWAFSCFFFVTAYIVL) threads the bilayer. The Extracellular segment spans residues 492 to 496 (KETQL).

The protein belongs to the TMEM104 family.

The protein resides in the membrane. In Mus musculus (Mouse), this protein is Transmembrane protein 104 (Tmem104).